The sequence spans 48 residues: DTDILAAFRVTPQPGVPPEEAGAADVTLGFVDLLRWSPELAAACEIWK.

Belongs to the RuBisCO large chain family. Type I subfamily. In terms of assembly, heterohexadecamer of 8 large chains and 8 small chains.

The protein resides in the plastid. It is found in the chloroplast. It carries out the reaction 2 (2R)-3-phosphoglycerate + 2 H(+) = D-ribulose 1,5-bisphosphate + CO2 + H2O. The catalysed reaction is D-ribulose 1,5-bisphosphate + O2 = 2-phosphoglycolate + (2R)-3-phosphoglycerate + 2 H(+). RuBisCO catalyzes two reactions: the carboxylation of D-ribulose 1,5-bisphosphate, the primary event in carbon dioxide fixation, as well as the oxidative fragmentation of the pentose substrate in the photorespiration process. Both reactions occur simultaneously and in competition at the same active site. In Pinus pinaster (Maritime pine), this protein is Ribulose bisphosphate carboxylase large chain (rbcL).